A 191-amino-acid polypeptide reads, in one-letter code: CASP-like protein 2U3 (191 aa).

At 1–25 (MGAYDGAEAPRAAPASTAANSRPSR) the chain is on the cytoplasmic side. The helical transmembrane segment at 26-46 (LLLLHSLLLRLVAVVVSILVI) threads the bilayer. Over 47–68 (AVMVHAKQRVMIFKAEWDNSKA) the chain is Extracellular. The chain crosses the membrane as a helical span at residues 69–89 (FVALVAISAICLGYSFLQFIL). At 90–114 (SAFHLCSKSWKSPTKCWAWMNFIAD) the chain is on the cytoplasmic side. A helical transmembrane segment spans residues 115–135 (QILTYAMLGAAAAAAELAYIA). Residues 136–157 (KNGSSRAQWQPICSTFNTFCTR) lie on the Extracellular side of the membrane. N-linked (GlcNAc...) asparagine glycosylation occurs at N137. Residues 158 to 178 (AGASIILSFIAVLALANSSAI) form a helical membrane-spanning segment. Over 179 to 191 (SAYHLFRRPSSSV) the chain is Cytoplasmic.

It belongs to the Casparian strip membrane proteins (CASP) family. As to quaternary structure, homodimer and heterodimers.

Its subcellular location is the cell membrane. The protein is CASP-like protein 2U3 of Selaginella moellendorffii (Spikemoss).